A 364-amino-acid chain; its full sequence is Methylthioribose-1-phosphate isomerase (364 aa).

The active-site Proton donor is aspartate 254.

It belongs to the eIF-2B alpha/beta/delta subunits family. MtnA subfamily.

It is found in the cytoplasm. It localises to the nucleus. The enzyme catalyses 5-(methylsulfanyl)-alpha-D-ribose 1-phosphate = 5-(methylsulfanyl)-D-ribulose 1-phosphate. It participates in amino-acid biosynthesis; L-methionine biosynthesis via salvage pathway; L-methionine from S-methyl-5-thio-alpha-D-ribose 1-phosphate: step 1/6. Catalyzes the interconversion of methylthioribose-1-phosphate (MTR-1-P) into methylthioribulose-1-phosphate (MTRu-1-P). The polypeptide is Methylthioribose-1-phosphate isomerase (Drosophila sechellia (Fruit fly)).